The primary structure comprises 257 residues: Probable septum site-determining protein MinC (257 aa).

The protein belongs to the MinC family. As to quaternary structure, interacts with MinD and FtsZ.

Functionally, cell division inhibitor that blocks the formation of polar Z ring septums. Rapidly oscillates between the poles of the cell to destabilize FtsZ filaments that have formed before they mature into polar Z rings. Prevents FtsZ polymerization. In Burkholderia lata (strain ATCC 17760 / DSM 23089 / LMG 22485 / NCIMB 9086 / R18194 / 383), this protein is Probable septum site-determining protein MinC.